The primary structure comprises 71 residues: Venom peptide 2-long (71 aa).

Positions 1-24 (MKQSIIIALFATIAVMACLQMVAA) are cleaved as a signal peptide. AXPX repeat units lie at residues 24-27 (AVPA), 32-35 (AAPG), 44-47 (ASPE), 50-53 (ASPE), and 54-57 (AEPI). Positions 25-54 (VPAPVPEAAPGPVAEAEAYASPEALASPEA) are excised as a propeptide. A Leucine amide modification is found at leucine 68.

It belongs to the MCD family. Protonectin subfamily. As to expression, expressed by the venom gland.

It localises to the secreted. The protein resides in the target cell membrane. Functionally, antimicrobial peptide with strong activity against the fungus B.cinerea (MIC=0.5 ug/ml), and poor activities against the fungus C.albicans (MIC=100 ug/ml), the Gram-positive bacterium S.aureus (MIC=125 ug/ml) and the Gram-negative bacterium E.coli (MIC=125 ug/ml). Antimicrobial peptide with strong activity against the fungus B.cinerea (MIC=0.4 uM), and poor activities against the fungus C.albicans (MIC=16 uM), the Gram-positive bacterium S.aureus (MIC=20 uM) and the Gram-negative bacterium E.coli (MIC=79 uM). Shows cytolytic activity against insect cell lines. Has potent hemolytic activity against ovine erythrocytes. Has potent hemolytic activity against human erythrocytes (EC(50)=31 uM). In vivo, peptide injection in the vicinity of the head and thorax of lepidopteran larvae induces feeding disorder followed by death due to starvation. The polypeptide is Venom peptide 2-long (Orancistrocerus drewseni (Solitary wasp)).